A 361-amino-acid chain; its full sequence is Outer membrane protein P2 (361 aa).

The N-terminal stretch at 1-20 (MKKTLAALIVGAFAASAANA) is a signal peptide.

It belongs to the Gram-negative porin family. Homotrimer.

It localises to the cell outer membrane. Forms pores that allow passive diffusion of small molecules across the outer membrane. This chain is Outer membrane protein P2 (ompP2), found in Haemophilus influenzae.